Reading from the N-terminus, the 137-residue chain is Proofreading thioesterase EntH (137 aa).

The active-site Nucleophile or proton acceptor is Glu63.

It belongs to the thioesterase PaaI family. In terms of assembly, homotetramer. Dimer of dimers. Interacts specifically with the aryl carrier protein (ArCP) domain of EntB.

The protein resides in the cytoplasm. It functions in the pathway siderophore biosynthesis; enterobactin biosynthesis. Required for optimal enterobactin synthesis. Acts as a proofreading enzyme that prevents EntB misacylation by hydrolyzing the thioester bound existing between EntB and wrongly charged molecules. The chain is Proofreading thioesterase EntH from Shigella sonnei (strain Ss046).